A 150-amino-acid polypeptide reads, in one-letter code: MGMGMMEVHLISGKGLQAHDPLNKPIDPYAEINFKGQERMSKVAKNAGPNPLWDEKFKFLAEYPGSGGDFHILFKVMDHDAIDGDDYIGDVKIDVKNLLAEGVRKGKSEMPPRMYHVLAHKIHFKGEIEVGVSFKLQGGGGCGGCYPWEN.

Residues 1–108 (MGMGMMEVHL…LAEGVRKGKS (108 aa)) form the C2 domain. Ca(2+) contacts are provided by Asp20, Asp27, Asp78, Asp80, and Asp86.

Ca(2+) serves as cofactor. Sieve elements of leaves, stems, roots and flowers.

Functionally, binds to both sense and antisense RNA. Interacts with mesophyll plasmodesmata to mediate its own cell-to-cell transport and potentiate RNA trafficking. The polypeptide is 16 kDa phloem protein 1 (PP16-1) (Cucurbita maxima (Pumpkin)).